Consider the following 253-residue polypeptide: 5-oxoprolinase subunit A (253 aa).

It belongs to the LamB/PxpA family. As to quaternary structure, forms a complex composed of PxpA, PxpB and PxpC.

It carries out the reaction 5-oxo-L-proline + ATP + 2 H2O = L-glutamate + ADP + phosphate + H(+). Functionally, catalyzes the cleavage of 5-oxoproline to form L-glutamate coupled to the hydrolysis of ATP to ADP and inorganic phosphate. This Bacillus cereus (strain ATCC 14579 / DSM 31 / CCUG 7414 / JCM 2152 / NBRC 15305 / NCIMB 9373 / NCTC 2599 / NRRL B-3711) protein is 5-oxoprolinase subunit A.